Here is a 253-residue protein sequence, read N- to C-terminus: uncharacterized protein (253 aa).

This sequence belongs to the herpesviridae BTRF1 family.

This is an uncharacterized protein from Saimiriine herpesvirus 2 (strain 11) (SaHV-2).